A 296-amino-acid chain; its full sequence is MQDRFIKSITQLPTPLADALIPLLHQNFAGHIDAQQLAELVQSSKMTEAEVLLALLPIAAALAKPPISEFYVGAIAKGKSGDIYMGANLELLGEALFHSVHAEQSAISHAWLSGESQIVDMIVNASPCGHCRQFMNELVEGGQIKIHLPSQDSHLLSYYLPYAFGPKDLNVQSPLLVKQETEFALDSSDPMVIEALDHAGLSYAPYTQSYAAVVLETADGATYCGRYAENAAFNPSMLPMQMALSNLTRHNRDFGEIRRAVLVESSQGKISLVGATMDALHAVAAIELEHIVVDPV.

2 CMP/dCMP-type deaminase domains span residues 47-167 and 186-296; these read TEAE…FGPK and DSSD…VDPV. Substrate is bound at residue 88–90; the sequence is NLE. H101 is a binding site for Zn(2+). The Proton donor role is filled by E103. The Zn(2+) site is built by C128 and C131.

This sequence belongs to the cytidine and deoxycytidylate deaminase family. In terms of assembly, homodimer. Zn(2+) is required as a cofactor.

It carries out the reaction cytidine + H2O + H(+) = uridine + NH4(+). The enzyme catalyses 2'-deoxycytidine + H2O + H(+) = 2'-deoxyuridine + NH4(+). Functionally, this enzyme scavenges exogenous and endogenous cytidine and 2'-deoxycytidine for UMP synthesis. This chain is Cytidine deaminase, found in Shewanella sp. (strain ANA-3).